The chain runs to 432 residues: Argininosuccinate lyase (432 aa).

The protein belongs to the lyase 1 family. Argininosuccinate lyase subfamily.

The protein localises to the cytoplasm. It carries out the reaction 2-(N(omega)-L-arginino)succinate = fumarate + L-arginine. The protein operates within amino-acid biosynthesis; L-arginine biosynthesis; L-arginine from L-ornithine and carbamoyl phosphate: step 3/3. This Xanthomonas axonopodis pv. citri (strain 306) protein is Argininosuccinate lyase.